The chain runs to 410 residues: Multifunctional CCA protein (410 aa).

ATP-binding residues include G8 and R11. Residues G8 and R11 each contribute to the CTP site. Mg(2+) contacts are provided by E21 and D23. Residues R91, R137, and R140 each contribute to the ATP site. 3 residues coordinate CTP: R91, R137, and R140. One can recognise an HD domain in the interval 228 to 329; that stretch reads TGIHSLMTLR…VKLLEQVDAF (102 aa).

The protein belongs to the tRNA nucleotidyltransferase/poly(A) polymerase family. Bacterial CCA-adding enzyme type 1 subfamily. Monomer. Can also form homodimers and oligomers. The cofactor is Mg(2+). Ni(2+) serves as cofactor.

The catalysed reaction is a tRNA precursor + 2 CTP + ATP = a tRNA with a 3' CCA end + 3 diphosphate. It catalyses the reaction a tRNA with a 3' CCA end + 2 CTP + ATP = a tRNA with a 3' CCACCA end + 3 diphosphate. In terms of biological role, catalyzes the addition and repair of the essential 3'-terminal CCA sequence in tRNAs without using a nucleic acid template. Adds these three nucleotides in the order of C, C, and A to the tRNA nucleotide-73, using CTP and ATP as substrates and producing inorganic pyrophosphate. tRNA 3'-terminal CCA addition is required both for tRNA processing and repair. Also involved in tRNA surveillance by mediating tandem CCA addition to generate a CCACCA at the 3' terminus of unstable tRNAs. While stable tRNAs receive only 3'-terminal CCA, unstable tRNAs are marked with CCACCA and rapidly degraded. This Legionella pneumophila subsp. pneumophila (strain Philadelphia 1 / ATCC 33152 / DSM 7513) protein is Multifunctional CCA protein.